A 197-amino-acid chain; its full sequence is HTH-type transcriptional regulator BetI (197 aa).

An HTH tetR-type domain is found at proline 8–leucine 68. The segment at residues serine 31 to phenylalanine 50 is a DNA-binding region (H-T-H motif).

It functions in the pathway amine and polyamine biosynthesis; betaine biosynthesis via choline pathway [regulation]. Functionally, repressor involved in the biosynthesis of the osmoprotectant glycine betaine. It represses transcription of the choline transporter BetT and the genes of BetAB involved in the synthesis of glycine betaine. The chain is HTH-type transcriptional regulator BetI from Pseudomonas savastanoi pv. phaseolicola (strain 1448A / Race 6) (Pseudomonas syringae pv. phaseolicola (strain 1448A / Race 6)).